The primary structure comprises 264 residues: Indole-3-glycerol phosphate synthase (264 aa).

This sequence belongs to the TrpC family.

It catalyses the reaction 1-(2-carboxyphenylamino)-1-deoxy-D-ribulose 5-phosphate + H(+) = (1S,2R)-1-C-(indol-3-yl)glycerol 3-phosphate + CO2 + H2O. It participates in amino-acid biosynthesis; L-tryptophan biosynthesis; L-tryptophan from chorismate: step 4/5. This is Indole-3-glycerol phosphate synthase from Rhizorhabdus wittichii (strain DSM 6014 / CCUG 31198 / JCM 15750 / NBRC 105917 / EY 4224 / RW1) (Sphingomonas wittichii).